We begin with the raw amino-acid sequence, 304 residues long: D-alanine--D-alanine ligase (304 aa).

Residues 104 to 299 (KMVWLSCGLP…FEALCLAILA (196 aa)) enclose the ATP-grasp domain. Residue 130–185 (ARDLGLPIFVKPVHEGSSMGATKVTEAGQLRAAWELAARYDSLVIAEEFISGQELT) coordinates ATP. Mg(2+) is bound by residues Asp-253, Glu-266, and Asn-268.

This sequence belongs to the D-alanine--D-alanine ligase family. The cofactor is Mg(2+). It depends on Mn(2+) as a cofactor.

It localises to the cytoplasm. The enzyme catalyses 2 D-alanine + ATP = D-alanyl-D-alanine + ADP + phosphate + H(+). Its pathway is cell wall biogenesis; peptidoglycan biosynthesis. Its function is as follows. Cell wall formation. This chain is D-alanine--D-alanine ligase, found in Azoarcus sp. (strain BH72).